We begin with the raw amino-acid sequence, 284 residues long: Homeobox protein SMOX-5 (284 aa).

Residues 37–96 constitute a DNA-binding region (homeobox); it reads RRKTRTTFSNCQLNELENNFNRQRYLTPTDRDRIAKHLGLTNTQVITWFQNRRAKLKREA. The tract at residues 117-172 is disordered; it reads LSLSDHDHEETQIDDENEQGDNNNDDDGDDNDVEEDDGEEQEKNHTKYLTQPPSIS. Positions 128–156 are enriched in acidic residues; it reads QIDDENEQGDNNNDDDGDDNDVEEDDGEE.

It localises to the nucleus. The chain is Homeobox protein SMOX-5 (SMOX-5) from Schistosoma mansoni (Blood fluke).